Reading from the N-terminus, the 646-residue chain is Sulfate transporter 3.2 (646 aa).

The Cytoplasmic portion of the chain corresponds to 1–76; the sequence is MSSKRASQYH…GYSLEYLKSD (76 aa). A helical membrane pass occupies residues 77–97; the sequence is VISGITIASLAIPQGISYAQL. Topologically, residues 98–99 are extracellular; that stretch reads AN. A helical membrane pass occupies residues 100-120; it reads LPPILGLYSSLVPPLVYAIMG. Over 121–124 the chain is Cytoplasmic; sequence SSRD. A helical transmembrane segment spans residues 125–145; that stretch reads LAVGTVAVASLLTAAMLGKEV. The Extracellular portion of the chain corresponds to 146-154; that stretch reads NAVVNPKLY. A helical transmembrane segment spans residues 155–175; it reads LHLAFTATFFAGLMQTCLGLL. Residue Arg176 is a topological domain, cytoplasmic. Residues 177–197 form a helical membrane-spanning segment; sequence LGFVVEILSHAAIVGFMGGAA. The Extracellular segment spans residues 198-235; sequence TVVCLQQLKGLLGLHHFTHSTDIVTVLRSIFSQSHMWR. The chain crosses the membrane as a helical span at residues 236-256; the sequence is WESGVLGCCFLIFLLTTKYIS. Over 257–262 the chain is Cytoplasmic; sequence KKRPKL. The chain crosses the membrane as a helical span at residues 263–283; sequence FWISAMSPLVSVIFGTIFLYF. Topologically, residues 284 to 315 are extracellular; that stretch reads LHDQFHGIQFIGELKKGINPPSITHLVFTPPY. Residues 316-336 traverse the membrane as a helical segment; that stretch reads VMLALKVGIITGVIALAEGIA. At 337–354 the chain is on the cytoplasmic side; it reads VGRSFAMYKNYNIDGNKE. The helical transmembrane segment at 355 to 375 threads the bilayer; the sequence is MIAFGMMNILGSFSSCYLTTG. The Extracellular segment spans residues 376–390; sequence PFSRSAVNYNAGCKT. The next 2 helical transmembrane spans lie at 391-411 and 412-432; these read ALSN…LTPL and FFYT…LGLV. The Extracellular segment spans residues 433 to 447; it reads DYEAAIHLWKLDKFD. A helical membrane pass occupies residues 448–468; that stretch reads FFVCLSAYLGVVFGTIEIGLI. At 469 to 646 the chain is on the cytoplasmic side; that stretch reads LSVGISVMRL…DSPVPEFNNV (178 aa). One can recognise an STAS domain in the interval 504-627; it reads HYPQAITRSS…LTVAEAVAAC (124 aa).

It belongs to the SLC26A/SulP transporter (TC 2.A.53) family. Expressed only in leaves.

It localises to the membrane. In terms of biological role, h(+)/sulfate cotransporter that may play a role in the regulation of sulfate assimilation. This Arabidopsis thaliana (Mouse-ear cress) protein is Sulfate transporter 3.2 (SULTR3;2).